The primary structure comprises 113 residues: Histidine triad nucleotide-binding protein (113 aa).

Zn(2+)-binding residues include C5 and C8. Residues 6 to 113 (IFCKIAQKQI…GGKKLAWDKL (108 aa)) enclose the HIT domain. D31 is an AMP binding site. Zn(2+) is bound at residue H47. The AMP site is built by N86, G92, and T94. A Zn(2+)-binding site is contributed by H97. Residues 97–101 (HIHFH) carry the Histidine triad motif motif. Residues H99 and H101 each contribute to the AMP site. H99 acts as the Tele-AMP-histidine intermediate in catalysis.

The protein belongs to the HINT family.

Its subcellular location is the nucleus. It is found in the cytoplasm. It carries out the reaction adenosine 5'-phosphoramidate + H2O = AMP + NH4(+). Hydrolyzes purine nucleotide phosphoramidates with a single phosphate group, including adenosine 5'monophosphoramidate (AMP-NH2), adenosine 5'monophosphomorpholidate (AMP-morpholidate) and guanosine 5'monophosphomorpholidate (GMP-morpholidate). Hydrolyzes lysyl-AMP (AMP-N-epsilon-(N-alpha-acetyl lysine methyl ester)) generated by lysine tRNA ligase, as well as Met-AMP, His-AMP and Asp-AMP, lysyl-GMP (GMP-N-epsilon-(N-alpha-acetyl lysine methyl ester)) and AMP-N-alanine methyl ester. May also function as scaffolding protein that mediates protein-protein interactions. The polypeptide is Histidine triad nucleotide-binding protein (Entamoeba histolytica (strain ATCC 30459 / HM-1:IMSS / ABRM)).